A 782-amino-acid chain; its full sequence is Endonuclease MutS2 (782 aa).

336–343 is a binding site for ATP; it reads GPNTGGKT. Residues 707 to 782 enclose the Smr domain; that stretch reads LDLRGYRYED…GFGVTVATLK (76 aa).

The protein belongs to the DNA mismatch repair MutS family. MutS2 subfamily. As to quaternary structure, homodimer. Binds to stalled ribosomes, contacting rRNA.

Endonuclease that is involved in the suppression of homologous recombination and thus may have a key role in the control of bacterial genetic diversity. In terms of biological role, acts as a ribosome collision sensor, splitting the ribosome into its 2 subunits. Detects stalled/collided 70S ribosomes which it binds and splits by an ATP-hydrolysis driven conformational change. Acts upstream of the ribosome quality control system (RQC), a ribosome-associated complex that mediates the extraction of incompletely synthesized nascent chains from stalled ribosomes and their subsequent degradation. Probably generates substrates for RQC. This is Endonuclease MutS2 from Staphylococcus aureus (strain MRSA252).